We begin with the raw amino-acid sequence, 308 residues long: E3 ubiquitin-protein ligase RING2 (308 aa).

Serine 2 carries the N-acetylserine modification. The tract at residues 2–179 is interaction with HIP2; it reads SQAVQTNGTQ…AEDNGDSSHC (178 aa). Serine 41 carries the post-translational modification Phosphoserine. The segment at 51–91 adopts an RING-type zinc-finger fold; sequence CPICLDMLKNTMTTKECLHRFCADCIITALRSGNKECPTCR. Positions 93–98 are interaction with nucleosomes via an acidic patch on histone H2A and histone H2B; that stretch reads KLVSKR. Residue lysine 112 forms a Glycyl lysine isopeptide (Lys-Gly) (interchain with G-Cter in ubiquitin) linkage. Phosphoserine is present on residues serine 143 and serine 168. Positions 157–206 are disordered; it reads QRGKKQQIENGSGAEDNGDSSHCSNASTHSNQEAGPSNKRTKTSDDSGLE. The span at 176 to 191 shows a compositional bias: polar residues; that stretch reads SSHCSNASTHSNQEAG. Lysine 249 is covalently cross-linked (Glycyl lysine isopeptide (Lys-Gly) (interchain with G-Cter in SUMO2)).

In terms of assembly, component of chromatin-associated Polycomb (PcG) complexes. Component of a number of PRC1-like complexes; these complexes contain either the polycomb group ring finger protein PCGF1, or PCGF2, or PCGF3, or BMI1, or PCGF5, or PCGF6. Distinct PRC1-like complexes are composed of a RING1 subunit (RING1B or RING1A), one of the six PCGF proteins (PCGF1, PCGF2, PCGF3, BMI1, PCGF5 or PCGF6), one PHC protein (PHC1, PHC2 or PHC3) and one of the CBX proteins (CBX2, CBX4, CBX6, CBX7 or CBX8). Part of a complex that contains RNF2, UB2D3 and BMI1; within that complex RNF2 and BMI1 form a tight heterodimer, where UB2D3 interacts only with RNF2. The complex composed of RNF2, UB2D3 and BMI1 binds nucleosomes, and has activity only with nucleosomal histone H2A. Part of a complex that contains PCGF5, RNF2 and UBE2D3. Part of a complex that contains AUTS2, PCGF5, RNF2, CSNK2B and RYBP. Interacts with CBX6 and CBX8. Interacts with PHC1, PCGF2, RYBP, CBX7, CBX4, CBX2, RNF1/RING1, BMI1 and PHC2. Interaction with RYBP and CBX7 is mutually exclusive; both compete for the same binding site on RNF2. Component of repressive BCOR complex containing a Polycomb group subcomplex at least composed of RYBP, PCGF1, BCOR and RING1. Interacts with CBX2 and PHC1. Interacts with CHTOP. Interacts with AURKB. Part of the E2F6.com-1 complex in G0 phase composed of E2F6, MGA, MAX, TFDP1, CBX3, BAT8, EUHMTASE1, RNF1/RING1, RNF2/RING2, MBLR, L3MBTL2 and YAF2. Component of some MLL1/MLL complex, at least composed of the core components KMT2A/MLL1, ASH2L, HCFC1/HCF1, WDR5 and RBBP5, as well as the facultative components BACC1, CHD8, E2F6, HSP70, INO80C, KANSL1, LAS1L, MAX, MCRS1, MGA, MYST1/MOF, PELP1, PHF20, PRP31, RING2, RUVB1/TIP49A, RUVB2/TIP49B, SENP3, TAF1, TAF4, TAF6, TAF7, TAF9 and TEX10. Interacts with RYBP, HIP2 and TFCP2. Interacts with NUPR1. Interacts with SAMD7 in a PHC2-dependent manner. Monoubiquitinated, by auto-ubiquitination. Polyubiquitinated in the presence of UBE2D3 (in vitro).

The protein localises to the nucleus. The protein resides in the cytoplasm. Its subcellular location is the chromosome. It carries out the reaction S-ubiquitinyl-[E2 ubiquitin-conjugating enzyme]-L-cysteine + [acceptor protein]-L-lysine = [E2 ubiquitin-conjugating enzyme]-L-cysteine + N(6)-ubiquitinyl-[acceptor protein]-L-lysine.. Its pathway is protein modification; protein ubiquitination. Functionally, E3 ubiquitin-protein ligase that mediates monoubiquitination of 'Lys-119' of histone H2A (H2AK119Ub), thereby playing a central role in histone code and gene regulation. H2AK119Ub gives a specific tag for epigenetic transcriptional repression and participates in X chromosome inactivation of female mammals. May be involved in the initiation of both imprinted and random X inactivation. Essential component of a Polycomb group (PcG) multiprotein PRC1-like complex, a complex class required to maintain the transcriptionally repressive state of many genes, including Hox genes, throughout development. PcG PRC1 complex acts via chromatin remodeling and modification of histones, rendering chromatin heritably changed in its expressibility. E3 ubiquitin-protein ligase activity is enhanced by BMI1/PCGF4. Acts as the main E3 ubiquitin ligase on histone H2A of the PRC1 complex, while RING1 may rather act as a modulator of RNF2/RING2 activity. Plays a role in the transcriptional repression of genes that are required for pluripotency in embryonic stem cells, thereby contributing to differentiation of the ectodermal and endodermal germ layers. Association with the chromosomal DNA is cell-cycle dependent. In resting B- and T-lymphocytes, interaction with AURKB leads to block its activity, thereby maintaining transcription in resting lymphocytes. Also acts as a negative regulator of autophagy by mediating ubiquitination of AMBRA1, leading to its subsequent degradation. In Rattus norvegicus (Rat), this protein is E3 ubiquitin-protein ligase RING2 (Rnf2).